A 66-amino-acid chain; its full sequence is uncharacterized protein (66 aa).

Transmembrane regions (helical) follow at residues 3 to 23 and 34 to 54; these read LIHVLAALPFIGILLGIPFAN and FILAYIVMWALLTSALMAIVY.

The protein resides in the cell membrane. This is an uncharacterized protein from Bacillus subtilis (strain 168).